The chain runs to 382 residues: ATP phosphoribosyltransferase regulatory subunit (382 aa).

The protein belongs to the class-II aminoacyl-tRNA synthetase family. HisZ subfamily. As to quaternary structure, heteromultimer composed of HisG and HisZ subunits.

The protein resides in the cytoplasm. It participates in amino-acid biosynthesis; L-histidine biosynthesis; L-histidine from 5-phospho-alpha-D-ribose 1-diphosphate: step 1/9. Required for the first step of histidine biosynthesis. May allow the feedback regulation of ATP phosphoribosyltransferase activity by histidine. The polypeptide is ATP phosphoribosyltransferase regulatory subunit (Acidovorax ebreus (strain TPSY) (Diaphorobacter sp. (strain TPSY))).